Consider the following 87-residue polypeptide: Small ribosomal subunit protein bS20 (87 aa).

The tract at residues Met-1–Lys-22 is disordered.

This sequence belongs to the bacterial ribosomal protein bS20 family.

Binds directly to 16S ribosomal RNA. The polypeptide is Small ribosomal subunit protein bS20 (Geobacter metallireducens (strain ATCC 53774 / DSM 7210 / GS-15)).